The primary structure comprises 557 residues: Dihydroxy-acid dehydratase (557 aa).

Asp-78 provides a ligand contact to Mg(2+). Residue Cys-119 participates in [2Fe-2S] cluster binding. Positions 120 and 121 each coordinate Mg(2+). An N6-carboxylysine modification is found at Lys-121. Cys-191 contributes to the [2Fe-2S] cluster binding site. Glu-442 contacts Mg(2+). Ser-468 serves as the catalytic Proton acceptor.

Belongs to the IlvD/Edd family. In terms of assembly, homodimer. [2Fe-2S] cluster is required as a cofactor. It depends on Mg(2+) as a cofactor.

The catalysed reaction is (2R)-2,3-dihydroxy-3-methylbutanoate = 3-methyl-2-oxobutanoate + H2O. It carries out the reaction (2R,3R)-2,3-dihydroxy-3-methylpentanoate = (S)-3-methyl-2-oxopentanoate + H2O. It participates in amino-acid biosynthesis; L-isoleucine biosynthesis; L-isoleucine from 2-oxobutanoate: step 3/4. The protein operates within amino-acid biosynthesis; L-valine biosynthesis; L-valine from pyruvate: step 3/4. In terms of biological role, functions in the biosynthesis of branched-chain amino acids. Catalyzes the dehydration of (2R,3R)-2,3-dihydroxy-3-methylpentanoate (2,3-dihydroxy-3-methylvalerate) into 2-oxo-3-methylpentanoate (2-oxo-3-methylvalerate) and of (2R)-2,3-dihydroxy-3-methylbutanoate (2,3-dihydroxyisovalerate) into 2-oxo-3-methylbutanoate (2-oxoisovalerate), the penultimate precursor to L-isoleucine and L-valine, respectively. The polypeptide is Dihydroxy-acid dehydratase (Syntrophobacter fumaroxidans (strain DSM 10017 / MPOB)).